The chain runs to 257 residues: 14-3-3-like protein GF14-G (257 aa).

It belongs to the 14-3-3 family.

Functionally, is associated with a DNA binding complex that binds to the G box, a well-characterized cis-acting DNA regulatory element found in plant genes. The chain is 14-3-3-like protein GF14-G (GF14G) from Oryza sativa subsp. japonica (Rice).